Consider the following 329-residue polypeptide: NADH-quinone oxidoreductase subunit H (329 aa).

The next 9 membrane-spanning stretches (helical) occupy residues 9-29 (LIKILILVAVFSALGGFATYI), 42-62 (GPCYVGPFGLLQVAADGIKLF), 75-95 (FIFTLAPIIAMVSAFVSMAPI), 117-137 (IGFLFFLAVGAAGIYAPILAG), 154-174 (IQLLSFEVVSTLTILAPLMVV), 188-208 (GGFLDWLVFKQPLAFVLFLIA), 238-258 (LKWGMFFLAEYAHLFAFSFVI), 269-291 (WGFIPGGIAILIKAGFFVFLSMW), and 309-329 (WKIMLPLALLNIVLTGIIILI).

This sequence belongs to the complex I subunit 1 family. As to quaternary structure, NDH-1 is composed of 14 different subunits. Subunits NuoA, H, J, K, L, M, N constitute the membrane sector of the complex.

The protein resides in the cell inner membrane. It catalyses the reaction a quinone + NADH + 5 H(+)(in) = a quinol + NAD(+) + 4 H(+)(out). NDH-1 shuttles electrons from NADH, via FMN and iron-sulfur (Fe-S) centers, to quinones in the respiratory chain. The immediate electron acceptor for the enzyme in this species is believed to be ubiquinone. Couples the redox reaction to proton translocation (for every two electrons transferred, four hydrogen ions are translocated across the cytoplasmic membrane), and thus conserves the redox energy in a proton gradient. This subunit may bind ubiquinone. The chain is NADH-quinone oxidoreductase subunit H from Helicobacter pylori (strain P12).